A 119-amino-acid polypeptide reads, in one-letter code: Holo-[acyl-carrier-protein] synthase (119 aa).

Asp-8 and Glu-59 together coordinate Mg(2+).

This sequence belongs to the P-Pant transferase superfamily. AcpS family. It depends on Mg(2+) as a cofactor.

Its subcellular location is the cytoplasm. It carries out the reaction apo-[ACP] + CoA = holo-[ACP] + adenosine 3',5'-bisphosphate + H(+). Its function is as follows. Transfers the 4'-phosphopantetheine moiety from coenzyme A to a Ser of acyl-carrier-protein. This is Holo-[acyl-carrier-protein] synthase from Staphylococcus aureus (strain JH1).